The following is a 100-amino-acid chain: UPF0213 protein YhbQ (100 aa).

The GIY-YIG domain occupies 2–77; it reads TPWFLYLIRT…KQLTKRQKER (76 aa).

Belongs to the UPF0213 family.

This is UPF0213 protein YhbQ from Escherichia fergusonii (strain ATCC 35469 / DSM 13698 / CCUG 18766 / IAM 14443 / JCM 21226 / LMG 7866 / NBRC 102419 / NCTC 12128 / CDC 0568-73).